Reading from the N-terminus, the 421-residue chain is Type II methyltransferase M.SfiI (421 aa).

This sequence belongs to the N(4)/N(6)-methyltransferase family. N(4) subfamily.

It carries out the reaction a 2'-deoxycytidine in DNA + S-adenosyl-L-methionine = an N(4)-methyl-2'-deoxycytidine in DNA + S-adenosyl-L-homocysteine + H(+). A beta subtype methylase, recognizes the double-stranded sequence 5'-GGCCNNNNNGGCC-3', methylates C-? on both strands, and protects the DNA from cleavage by the SfiI endonuclease. The sequence is that of Type II methyltransferase M.SfiI from Streptomyces fimbriatus.